The primary structure comprises 156 residues: Small ribosomal subunit protein uS7 (156 aa).

Belongs to the universal ribosomal protein uS7 family. Part of the 30S ribosomal subunit. Contacts proteins S9 and S11.

One of the primary rRNA binding proteins, it binds directly to 16S rRNA where it nucleates assembly of the head domain of the 30S subunit. Is located at the subunit interface close to the decoding center, probably blocks exit of the E-site tRNA. This chain is Small ribosomal subunit protein uS7, found in Nitrosospira multiformis (strain ATCC 25196 / NCIMB 11849 / C 71).